A 207-amino-acid chain; its full sequence is MDFLTNQNIVFYLLAYLIGSIPFGLILAKTFAGVDIKSQGSKSIGATNVLRVVKQTNPSLAKKLGIATVLLDALKGTLVLLVGIYYGVTNETLWAIAVLAVLGHCYSIYLGLEGGKGVATGLGVYIVLIPYSTLIGAVVWIVCAKVLKISSLSSLLGLIAAVISAIFIYNGLGINSNIPMYLIAFIILYKHIPNIVRLIKGQEGKVI.

Helical transmembrane passes span 8–28 (NIVFYLLAYLIGSIPFGLILA), 64–84 (LGIATVLLDALKGTLVLLVGI), 92–112 (TLWAIAVLAVLGHCYSIYLGL), 122–142 (LGVYIVLIPYSTLIGAVVWIV), 154–174 (SLLGLIAAVISAIFIYNGLGI), and 176–196 (SNIPMYLIAFIILYKHIPNIV).

The protein belongs to the PlsY family. As to quaternary structure, probably interacts with PlsX.

Its subcellular location is the cell inner membrane. The enzyme catalyses an acyl phosphate + sn-glycerol 3-phosphate = a 1-acyl-sn-glycero-3-phosphate + phosphate. Its pathway is lipid metabolism; phospholipid metabolism. Catalyzes the transfer of an acyl group from acyl-phosphate (acyl-PO(4)) to glycerol-3-phosphate (G3P) to form lysophosphatidic acid (LPA). This enzyme utilizes acyl-phosphate as fatty acyl donor, but not acyl-CoA or acyl-ACP. The chain is Glycerol-3-phosphate acyltransferase from Aliarcobacter butzleri (strain RM4018) (Arcobacter butzleri).